We begin with the raw amino-acid sequence, 184 residues long: Putative manganese efflux pump MntP (184 aa).

6 helical membrane-spanning segments follow: residues 12–32, 39–59, 63–83, 99–119, 132–152, and 164–184; these read SIMAFALGMDAFSVGLGMGMI, IIYIGLVIGIFHMFMPLFGML, LLSGWLGLLATYIGGALLLVL, FIAPVGAGLVLFATSVSLDSF, VWMTILLFGFFSMILTWLGLL, and YSGALGGIILLAFGIKLLFPL.

This sequence belongs to the MntP (TC 9.B.29) family.

Its subcellular location is the cell membrane. Functionally, probably functions as a manganese efflux pump. This is Putative manganese efflux pump MntP from Bacillus pumilus (strain SAFR-032).